We begin with the raw amino-acid sequence, 744 residues long: Elongation factor G, mitochondrial (744 aa).

The region spanning 39-316 is the tr-type G domain; the sequence is EKIRNIGISA…AVIDYLPNPG (278 aa). GTP is bound by residues 48–55, 115–119, and 169–172; these read AHIDSGKT, DTPGH, and NKLD. Residues 725–735 are compositionally biased toward polar residues; that stretch reads VRQYQETQGAS. The interval 725 to 744 is disordered; sequence VRQYQETQGASQPDKKKKKN.

The protein belongs to the TRAFAC class translation factor GTPase superfamily. Classic translation factor GTPase family. EF-G/EF-2 subfamily.

It is found in the mitochondrion. Its pathway is protein biosynthesis; polypeptide chain elongation. Its function is as follows. Mitochondrial GTPase that catalyzes the GTP-dependent ribosomal translocation step during translation elongation. During this step, the ribosome changes from the pre-translocational (PRE) to the post-translocational (POST) state as the newly formed A-site-bound peptidyl-tRNA and P-site-bound deacylated tRNA move to the P and E sites, respectively. Catalyzes the coordinated movement of the two tRNA molecules, the mRNA and conformational changes in the ribosome. Essential during development as it acts as a retrograde signal from mitochondria to the nucleus to slow down cell proliferation if mitochondrial energy output is low. This Drosophila pseudoobscura pseudoobscura (Fruit fly) protein is Elongation factor G, mitochondrial.